The following is an 839-amino-acid chain: DNA gyrase subunit A (839 aa).

The region spanning 46–510 is the Topo IIA-type catalytic domain; that stretch reads LPDARDGLKP…ISEDIDDEDL (465 aa). The active-site O-(5'-phospho-DNA)-tyrosine intermediate is Tyr-134. Positions 537–543 match the GyrA-box motif; the sequence is QHRGGVG.

The protein belongs to the type II topoisomerase GyrA/ParC subunit family. As to quaternary structure, heterotetramer, composed of two GyrA and two GyrB chains. In the heterotetramer, GyrA contains the active site tyrosine that forms a transient covalent intermediate with DNA, while GyrB binds cofactors and catalyzes ATP hydrolysis.

Its subcellular location is the cytoplasm. It carries out the reaction ATP-dependent breakage, passage and rejoining of double-stranded DNA.. Functionally, a type II topoisomerase that negatively supercoils closed circular double-stranded (ds) DNA in an ATP-dependent manner to modulate DNA topology and maintain chromosomes in an underwound state. Negative supercoiling favors strand separation, and DNA replication, transcription, recombination and repair, all of which involve strand separation. Also able to catalyze the interconversion of other topological isomers of dsDNA rings, including catenanes and knotted rings. Type II topoisomerases break and join 2 DNA strands simultaneously in an ATP-dependent manner. The protein is DNA gyrase subunit A of Mycoplasma pneumoniae (strain ATCC 29342 / M129 / Subtype 1) (Mycoplasmoides pneumoniae).